A 251-amino-acid chain; its full sequence is Gamma-glutamyl peptidase 4 (251 aa).

The 198-residue stretch at 16-213 (SEFAKKTYGG…IDRVLAGGHI (198 aa)) folds into the Glutamine amidotransferase type-1 domain. Cys100 (nucleophile) is an active-site residue. Active-site residues include His192 and Glu194.

It belongs to the peptidase C26 family.

It localises to the cytoplasm. Its subcellular location is the cytosol. It functions in the pathway secondary metabolite biosynthesis. In terms of biological role, involved in glucosinolate biosynthesis. Hydrolyzes the gamma-glutamyl peptide bond of several glutathione (GSH) conjugates to produce Cys-Gly conjugates related to glucosinolates. The gamma-Glu-Cys-Gly-GSH conjugates are the sulfur-donating molecule in glucosinolate biosynthesis. This chain is Gamma-glutamyl peptidase 4, found in Arabidopsis thaliana (Mouse-ear cress).